Consider the following 410-residue polypeptide: MEFSLDNNINNGAVIKVIGVGGGGGNAVNRMIEENVKGVEFITANTDVQALKHSKAETVIQLGPKYTRGLGAGSQPEVGQKAAEESEQVISESLQGADMIFITAGMGGGTGTGAAPVVAKIAKELGALTVGVVTRPFSFEGPKRGRFAAEGIALLKENVDTLLIISNNRLLEVVDKKTPMLEAFREADNVLRQGVQGISDLITAPGYVNLDFADVKTVMENQGTALMGIGVASGEERVIEATKKAISSPLLETSIDGAEQVLLNITGGLDMTLFEAQDASDIVTNAASGDVNIILGTSINEDLGDEIRVTVIATGIDESKKDRKPHRQTRQAVQPMQQTTQSVEMDQPKSQEEASAFGDWDIRREQNTRPKVDESSLEQVDKKEFDTFHREEPNHNDDELSTPPFFRRKR.

Residues 22 to 26 (GGGGN), 109 to 111 (GTG), E140, R144, and D188 contribute to the GTP site. Positions 318–410 (ESKKDRKPHR…STPPFFRRKR (93 aa)) are disordered. Over residues 330–344 (RQAVQPMQQTTQSVE) the composition is skewed to polar residues. A compositionally biased stretch (basic and acidic residues) spans 360 to 398 (WDIRREQNTRPKVDESSLEQVDKKEFDTFHREEPNHNDD).

It belongs to the FtsZ family. In terms of assembly, homodimer. Polymerizes to form a dynamic ring structure in a strictly GTP-dependent manner. Interacts directly with several other division proteins.

It is found in the cytoplasm. Its function is as follows. Essential cell division protein that forms a contractile ring structure (Z ring) at the future cell division site. The regulation of the ring assembly controls the timing and the location of cell division. One of the functions of the FtsZ ring is to recruit other cell division proteins to the septum to produce a new cell wall between the dividing cells. Binds GTP and shows GTPase activity. In Enterococcus faecalis (strain ATCC 700802 / V583), this protein is Cell division protein FtsZ.